A 276-amino-acid polypeptide reads, in one-letter code: Diaminopimelate epimerase (276 aa).

Residues Asn-13, Gln-46, and Asn-66 each coordinate substrate. Catalysis depends on Cys-75, which acts as the Proton donor. Substrate contacts are provided by residues 76–77 (GN), Asn-159, Asn-192, and 210–211 (ER). Cys-219 serves as the catalytic Proton acceptor. 220–221 (GT) contacts substrate.

The protein belongs to the diaminopimelate epimerase family. In terms of assembly, homodimer.

The protein localises to the cytoplasm. It carries out the reaction (2S,6S)-2,6-diaminopimelate = meso-2,6-diaminopimelate. It participates in amino-acid biosynthesis; L-lysine biosynthesis via DAP pathway; DL-2,6-diaminopimelate from LL-2,6-diaminopimelate: step 1/1. Its function is as follows. Catalyzes the stereoinversion of LL-2,6-diaminopimelate (L,L-DAP) to meso-diaminopimelate (meso-DAP), a precursor of L-lysine and an essential component of the bacterial peptidoglycan. This is Diaminopimelate epimerase from Pseudomonas aeruginosa (strain UCBPP-PA14).